A 458-amino-acid chain; its full sequence is Dynein regulatory complex protein 10 (458 aa).

Coiled coils occupy residues 96–137, 209–255, and 285–379; these read GQTL…HKVN, IQDI…KNHL, and QVRL…IRAE. The IQ domain maps to 397–426; sequence MVRAATLIQAVWKGYLVRSILRSKKKKRGK. Residues 419-458 form a disordered region; sequence SKKKKRGKGKGKDKGKGKEKPKEEKAKEKKPKAKGKGKKK. The span at 428–445 shows a compositional bias: basic and acidic residues; sequence KGKDKGKGKEKPKEEKAK. Over residues 446 to 458 the composition is skewed to basic residues; sequence EKKPKAKGKGKKK.

The protein belongs to the DRC10 family. As to quaternary structure, component of the nexin-dynein regulatory complex (N-DRC). Interacts with CFAP52.

The protein resides in the cytoplasm. It localises to the cytoskeleton. Its subcellular location is the flagellum axoneme. Its function is as follows. Component of the nexin-dynein regulatory complex (N-DRC), a key regulator of ciliary/flagellar motility which maintains the alignment and integrity of the distal axoneme and regulates microtubule sliding in motile axonemes. In Mus musculus (Mouse), this protein is Dynein regulatory complex protein 10 (Iqcd).